The primary structure comprises 257 residues: Zinc import ATP-binding protein ZnuC (257 aa).

The region spanning 5–220 is the ABC transporter domain; sequence ITLKNVAVNF…PEFIAMFGHH (216 aa). 37-44 provides a ligand contact to ATP; the sequence is GPNGAGKS.

The protein belongs to the ABC transporter superfamily. Zinc importer (TC 3.A.1.15.5) family. In terms of assembly, the complex is composed of two ATP-binding proteins (ZnuC), two transmembrane proteins (ZnuB) and a solute-binding protein (ZnuA).

The protein localises to the cell inner membrane. It catalyses the reaction Zn(2+)(out) + ATP(in) + H2O(in) = Zn(2+)(in) + ADP(in) + phosphate(in) + H(+)(in). In terms of biological role, part of the ABC transporter complex ZnuABC involved in zinc import. Responsible for energy coupling to the transport system. In Photorhabdus laumondii subsp. laumondii (strain DSM 15139 / CIP 105565 / TT01) (Photorhabdus luminescens subsp. laumondii), this protein is Zinc import ATP-binding protein ZnuC.